A 71-amino-acid polypeptide reads, in one-letter code: Protein DP71L (71 aa).

2 important for host CHOP inhibition regions span residues 16 to 18 (VRF) and 57 to 61 (LSTVL).

Belongs to the asfivirus DP71L family. In terms of assembly, interacts (via C-terminus) with host PPP1CB.

In terms of biological role, interacts with the host phosphatase PP1 catalytic subunit (PPP1CB) and recruits it to dephosphorylate EIF2S1/eIF2alpha and therefore restores the host translation that has been shut-down by the host. Also inhibits the EIF2S1/eIF2alpha-ATF4-DDIT3/CHOP pathway. This African swine fever virus (strain Badajoz 1971 Vero-adapted) (Ba71V) protein is Protein DP71L.